The chain runs to 204 residues: Probable dTDP-4-oxo-2,6-dideoxy-D-glucose 3,5-epimerase (204 aa).

Substrate is bound by residues R21, E26, 45–47 (QAN), K70, and H117. Y130 serves as the catalytic Proton donor. Position 141 (E141) interacts with substrate. The interval 164-204 (VGEGTPTHRPWRRPRRPGILPDYEGVPGALHRGGGRRGTGP) is disordered.

It belongs to the dTDP-4-dehydrorhamnose 3,5-epimerase family.

Its pathway is antibiotic biosynthesis. Involved in the biosynthesis of one of the two 2,6-deoxysugars, dTDP-L-oleandrose, attached to the macrolactone ring oleandolide to produce the aglycone antibiotic oleandomycin. Probably catalyzes the conversion of dTDP-4-keto-2,6-dideoxy-alpha-D-glucose to dTDP-4-keto-2,6-dideoxy-beta-L-galactose. In Streptomyces antibioticus, this protein is Probable dTDP-4-oxo-2,6-dideoxy-D-glucose 3,5-epimerase.